Here is a 151-residue protein sequence, read N- to C-terminus: Mini-ribonuclease 3 (151 aa).

Aspartate 28 is a catalytic residue.

This sequence belongs to the MrnC RNase family. As to quaternary structure, homodimer. It depends on Mg(2+) as a cofactor.

It localises to the cytoplasm. In terms of biological role, involved in correct processing of both the 5' and 3' ends of 23S rRNA precursor. Processes 30S rRNA precursor transcript even in absence of ribonuclease 3 (Rnc); Rnc processes 30S rRNA into smaller rRNA precursors. The chain is Mini-ribonuclease 3 from Clostridium tetani (strain Massachusetts / E88).